We begin with the raw amino-acid sequence, 418 residues long: Lactosylceramide alpha-2,3-sialyltransferase (418 aa).

Positions 1-25 (MRTKAAGCAERRPLQPRTEAAAAPA) are disordered. Over 1–61 (MRTKAAGCAE…RAQSKMRRPS (61 aa)) the chain is Cytoplasmic. Residues 62–82 (LLLKDILKCTLLVFGVWILYI) traverse the membrane as a helical; Signal-anchor for type II membrane protein segment. At 83–418 (LKLNYTTEEC…DLSGGIDREF (336 aa)) the chain is on the lumenal side. N-linked (GlcNAc...) asparagine glycans are attached at residues asparagine 86, asparagine 236, and asparagine 390. Cysteine 195 and cysteine 353 form a disulfide bridge.

Belongs to the glycosyltransferase 29 family. In terms of processing, N-glycosylated. In terms of tissue distribution, ubiquitous. High expression in brain, skeletal muscle, placenta, and testis. mRNA widely distributed in human brain, but slightly elevated expression was observed in the cerebral cortex, temporal lobe, and putamen.

It is found in the golgi apparatus membrane. The enzyme catalyses a beta-D-Gal-(1-&gt;4)-beta-D-Glc-(1&lt;-&gt;1)-Cer(d18:1(4E)) + CMP-N-acetyl-beta-neuraminate = a ganglioside GM3 (d18:1(4E)) + CMP + H(+). It carries out the reaction ganglioside GA2 (d18:1(4E)/18:0) + CMP-N-acetyl-beta-neuraminate = ganglioside GM2 (d18:1(4E)/18:0) + CMP + H(+). It catalyses the reaction a beta-D-Gal-(1&lt;-&gt;1')-ceramide + CMP-N-acetyl-beta-neuraminate = N-acetyl-alpha-neuraminosyl-(2-&gt;3)-beta-D-galactosyl-(1&lt;-&gt;1')-ceramide + CMP + H(+). The catalysed reaction is a beta-D-galactosyl-(1&lt;-&gt;1')-N-acylsphing-4-enine + CMP-N-acetyl-beta-neuraminate = a ganglioside GM4 (d18:1(4E)) + CMP + H(+). The enzyme catalyses ganglioside GA1 (d18:1(4E)/18:0) + CMP-N-acetyl-beta-neuraminate = ganglioside GM1 (d18:1(4E)/18:0) + CMP + H(+). It functions in the pathway glycolipid biosynthesis. Transfers the sialyl group (N-acetyl-alpha-neuraminyl or NeuAc) from CMP-NeuAc to the non-reducing terminal galactose (Gal) of glycosphingolipids forming gangliosides (important molecules involved in the regulation of multiple cellular processes, including cell proliferation and differentiation, apoptosis, embryogenesis, development, and oncogenesis). Mainly involved in the biosynthesis of ganglioside GM3 but can also use different glycolipids as substrate acceptors such as D-galactosylceramide (GalCer), asialo-GM2 (GA2) and asialo-GM1 (GA1), although less preferentially than beta-D-Gal-(1-&gt;4)-beta-D-Glc-(1&lt;-&gt;1)-Cer (LacCer). In Homo sapiens (Human), this protein is Lactosylceramide alpha-2,3-sialyltransferase (ST3GAL5).